A 193-amino-acid chain; its full sequence is Putative manganese efflux pump MntP (193 aa).

The next 6 helical transmembrane spans lie at 6–26 (VVFV…GIAC), 39–59 (VAGT…YAGL), 61–81 (IADV…TVIG), 106–126 (LGLL…GLTF), 132–152 (NIGL…YLGF), and 165–185 (WVGI…LAEH).

This sequence belongs to the MntP (TC 9.B.29) family.

It is found in the cell membrane. Probably functions as a manganese efflux pump. In Dehalococcoides mccartyi (strain ATCC BAA-2266 / KCTC 15142 / 195) (Dehalococcoides ethenogenes (strain 195)), this protein is Putative manganese efflux pump MntP.